Reading from the N-terminus, the 418-residue chain is S-adenosylmethionine synthase (418 aa).

Residue histidine 16 participates in ATP binding. Aspartate 18 contributes to the Mg(2+) binding site. Glutamate 44 is a K(+) binding site. L-methionine is bound by residues glutamate 57 and glutamine 100. Residues 100-110 (QSPDIAQGVDS) form a flexible loop region. Residues 174–176 (DGK), aspartate 259, 265–266 (RK), alanine 282, and lysine 286 contribute to the ATP site. Residue aspartate 259 coordinates L-methionine. Lysine 290 serves as a coordination point for L-methionine.

This sequence belongs to the AdoMet synthase family. In terms of assembly, homotetramer; dimer of dimers. Requires Mg(2+) as cofactor. The cofactor is K(+).

It localises to the cytoplasm. It catalyses the reaction L-methionine + ATP + H2O = S-adenosyl-L-methionine + phosphate + diphosphate. It participates in amino-acid biosynthesis; S-adenosyl-L-methionine biosynthesis; S-adenosyl-L-methionine from L-methionine: step 1/1. Catalyzes the formation of S-adenosylmethionine (AdoMet) from methionine and ATP. The overall synthetic reaction is composed of two sequential steps, AdoMet formation and the subsequent tripolyphosphate hydrolysis which occurs prior to release of AdoMet from the enzyme. This Acaryochloris marina (strain MBIC 11017) protein is S-adenosylmethionine synthase.